Reading from the N-terminus, the 1211-residue chain is Endoplasmic reticulum transmembrane helix translocase (1211 aa).

The Cytoplasmic segment spans residues 1-23 (MGSKALITSPDISSGQLYIKLPT). A helical transmembrane segment spans residues 24–44 (FFHLYVWPFALFVYPYIGYVY). Residues 45 to 54 (QNKLYSEEVR) lie on the Lumenal side of the membrane. A helical membrane pass occupies residues 55 to 75 (YLTYIAVGTIHALFWLAGEWN). The Cytoplasmic portion of the chain corresponds to 76 to 191 (TKVYCLMTCR…FDIPIPTFGT (116 aa)). The segment at 155 to 185 (TIGTLKKSTGLTNIQSEIFLYRYGKNCFDIP) is A-domain; part 1. A helical transmembrane segment spans residues 192–212 (LFKEHAVAPFFVFQIFCCVLW). Residues 213 to 216 (CLDD) lie on the Lumenal side of the membrane. A helical transmembrane segment spans residues 217 to 237 (YWYFSLFSMFMIIALECSVVW). At 238–397 (QRQRTLTEFR…EKVTANNRES (160 aa)) the chain is on the cytoplasmic side. The A-domain; part 2 stretch occupies residues 250 to 388 (SIKPYEIQVY…LVRTMVFSSE (139 aa)). Residues 398 to 418 (LYFILFLLVFAIAASGYVWHV) form a helical membrane-spanning segment. Over 419–1057 (GSKTERSRYK…KERPQAGIFN (639 aa)) the chain is Lumenal. Residues 464-493 (YIYCTEPFRIPLSGHLDICCFDKTGTLTEE) are P-domain; part 1. Asp-485 (4-aspartylphosphate intermediate) is an active-site residue. Mg(2+) contacts are provided by Asp-485 and Thr-487. Residues 485 to 487 (DKT), Phe-587, Arg-644, Asp-710, and 824 to 828 (DGTND) each bind ATP. An N-domain region spans residues 495 to 685 (MVVQGIAGVN…FAGFLIFTSP (191 aa)). Residues 688 to 845 (EDARQTVQML…HVGVALLNAS (158 aa)) are P-domain; part 2. Asp-824 is a binding site for Mg(2+). Residues 846 to 955 (EEDMLEMQER…NASDDEAPKL (110 aa)) form an arm-like region. Residues 956 to 971 (KLGDASVAAPFTSKLA) form a P-domain; part 3 region. Residues 1058-1078 (TYIIGSVLGQFAIHIVTLIYI) traverse the membrane as a helical segment. At 1079–1100 (TRVVYLYEDPLEKVDLEETFKP) the chain is on the cytoplasmic side. Residues 1101–1121 (SLLNTAIYLLQLIQQVSTFAI) traverse the membrane as a helical segment. At 1122-1136 (NYQGRPFREALSENK) the chain is on the lumenal side. A helical membrane pass occupies residues 1137-1157 (GMYYGLLGIAFVAIAGVTEFS). The Cytoplasmic segment spans residues 1158–1174 (PELNAKLQLVKMAYNFQ). The chain crosses the membrane as a helical span at residues 1175-1195 (IQLLATMVVDYAACWIIEELM). The Lumenal portion of the chain corresponds to 1196–1211 (KKYFRDNKPKEIVLRN).

Belongs to the cation transport ATPase (P-type) (TC 3.A.3) family. Type V subfamily. Mg(2+) serves as cofactor.

The protein resides in the endoplasmic reticulum membrane. It catalyses the reaction [protein]-with a C-terminal TM segment(out) + ATP + H2O = [protein]-with a C-terminal TM segment(in) + ADP + phosphate + H(+). Functionally, endoplasmic reticulum translocase required to remove mitochondrial transmembrane proteins mistargeted to the endoplasmic reticulum. Acts as a dislocase that mediates the ATP-dependent extraction of mislocalized mitochondrial transmembrane proteins from the endoplasmic reticulum membrane. Specifically binds mitochondrial tail-anchored transmembrane proteins: has an atypically large substrate-binding pocket that recognizes and binds moderately hydrophobic transmembranes with short hydrophilic lumenal domains. Involved in controlling nuclear calcium ion levels. Required for cytokinesis and stabilizing microtubules. Required for assembly of the forespore membrane. Involved in calcium transport to the endoplasmic reticulum. This is Endoplasmic reticulum transmembrane helix translocase from Schizosaccharomyces pombe (strain 972 / ATCC 24843) (Fission yeast).